A 329-amino-acid polypeptide reads, in one-letter code: Transcription factor RF2b (329 aa).

2 disordered regions span residues 1–24 and 62–97; these read MQEPKHTDPAAMRGAHHRRARSEV and SSGPAAAGGSDRDRAAETSSPPRPKHRHSSSVDGSG. The region spanning 132 to 195 is the bZIP domain; sequence DPKRAKRILA…TGLSAENAEL (64 aa). The segment at 134-155 is basic motif; the sequence is KRAKRILANRQSAARSKERKAR. The tract at residues 160–174 is leucine-zipper; that stretch reads LERKVQTLQTEATTL. A disordered region spans residues 260-303; that stretch reads RQNGGTQLPPQFQPPRPNVPNHMLSHPNGLQDIMQQDPLGRLQG.

Belongs to the bZIP family. Binds DNA as a homodimer or as a heterodimer with RF2a. The heterodimer binds stronger to DNA than the homodimer. In terms of tissue distribution, expressed at high levels in roots, low level in leaf sheath, but not in leaf blade. Predominantly expressed in vascular tissues.

It localises to the nucleus. Its function is as follows. Transcription factor probably involved in vascular development and shoot tissue organization. Binds to the DNA sequence 5'-CCGAGTGTGCCCCTGG-3' present in the promoter region Box II of the phloem-specific rice tungro bacilliform virus (RTBV) promoter. May regulate tissue-specific expression of the RTBV promoter and virus replication. In Oryza sativa subsp. japonica (Rice), this protein is Transcription factor RF2b (RF2b).